Reading from the N-terminus, the 95-residue chain is Large ribosomal subunit protein uL23 (95 aa).

This sequence belongs to the universal ribosomal protein uL23 family. As to quaternary structure, part of the 50S ribosomal subunit. Contacts protein L29, and trigger factor when it is bound to the ribosome.

Its function is as follows. One of the early assembly proteins it binds 23S rRNA. One of the proteins that surrounds the polypeptide exit tunnel on the outside of the ribosome. Forms the main docking site for trigger factor binding to the ribosome. This is Large ribosomal subunit protein uL23 from Deinococcus deserti (strain DSM 17065 / CIP 109153 / LMG 22923 / VCD115).